A 214-amino-acid chain; its full sequence is A-type ATP synthase subunit D (214 aa).

The protein belongs to the V-ATPase D subunit family. Has multiple subunits with at least A(3), B(3), C, D, E, F, H, I and proteolipid K(x).

It localises to the cell membrane. Its function is as follows. Component of the A-type ATP synthase that produces ATP from ADP in the presence of a proton gradient across the membrane. This Thermococcus gammatolerans (strain DSM 15229 / JCM 11827 / EJ3) protein is A-type ATP synthase subunit D.